Consider the following 238-residue polypeptide: Probable transglycosylase SceD 1 (238 aa).

A signal peptide spans M1 to A27. The segment covering T87–Q97 has biased composition (polar residues). The tract at residues T87–N161 is disordered. Over residues E102 to E156 the composition is skewed to low complexity.

This sequence belongs to the transglycosylase family. SceD subfamily.

It is found in the secreted. Is able to cleave peptidoglycan and affects clumping and separation of bacterial cells. The sequence is that of Probable transglycosylase SceD 1 (sceD1) from Staphylococcus saprophyticus subsp. saprophyticus (strain ATCC 15305 / DSM 20229 / NCIMB 8711 / NCTC 7292 / S-41).